The following is a 179-amino-acid chain: Translation initiation factor IF-3 (179 aa).

Belongs to the IF-3 family. Monomer.

The protein localises to the cytoplasm. In terms of biological role, IF-3 binds to the 30S ribosomal subunit and shifts the equilibrium between 70S ribosomes and their 50S and 30S subunits in favor of the free subunits, thus enhancing the availability of 30S subunits on which protein synthesis initiation begins. The polypeptide is Translation initiation factor IF-3 (Buchnera aphidicola subsp. Acyrthosiphon pisum (strain APS) (Acyrthosiphon pisum symbiotic bacterium)).